Reading from the N-terminus, the 642-residue chain is Cylicin-1 (642 aa).

2 disordered regions span residues 167-203 (NGEP…NLEY) and 284-607 (NCSQ…CEPF). Over residues 191 to 203 (KTSNSTSETNLEY) the composition is skewed to polar residues. 8 consecutive repeat copies span residues 294–313 (LKTG…GSKD), 314–344 (AKKE…DSKD), 345–391 (GKKK…KKST), 392–432 (GSTG…SSKK), 433–464 (SKKD…SEGD), 465–500 (STGK…SDLG), 501–526 (VNKK…SKAG), and 527–543 (RRKN…DSSG). Residues 298–316 (GKKERDSDIDSGGSKDAKK) show a composition bias toward basic and acidic residues. Positions 317 to 330 (EGKKKGKRESRKKR) are enriched in basic residues. Residues 353–364 (KKNEIKKKKDTD) show a composition bias toward basic and acidic residues. Low complexity predominate over residues 388-404 (KKSTGSTGSESVDSKST). Positions 405-416 (NKVKKQVKKGVM) are enriched in basic residues. Positions 428 to 440 (ASSKKSKKDEKKE) are enriched in basic and acidic residues. Acidic residues predominate over residues 454–463 (STDADSESEG). The span at 465–488 (STGKKNEKKDKKITKKGEKKDAKK) shows a compositional bias: basic and acidic residues. The span at 513–523 (SFSDSTSDSYS) shows a compositional bias: low complexity. Positions 527–543 (RRKNVRRSDSESEDSSG) are 8 X approximate tandem repeats.

As to quaternary structure, interacts with proteins of spermatozoa head including ACTL7A, CCIN, FAM209 and SPACA1; the interactions may be necessary for proper acrosome attachment to the nuclear envelope. Testis.

Its subcellular location is the cytoplasm. The protein resides in the cytoskeleton. The protein localises to the perinuclear theca. It is found in the calyx. Its function is as follows. Plays a role in the establishment of normal sperm morphology during spermatogenesis and is required for acrosome attachment to the nuclear envelope. The polypeptide is Cylicin-1 (Mus musculus (Mouse)).